The chain runs to 1454 residues: Probable cleavage and polyadenylation specificity factor subunit 1 (1454 aa).

The tract at residues 736 to 765 (KQSNTRKRKRLGHDAIQSSRGGEQSDAIDP) is disordered.

It belongs to the CPSF1 family. CPSF is a heterotetramer composed of four distinct subunits 160 (cpsf-1), 100 (cpsf-2), 70 (cpsf-3), and 30 kDa (cpsf-4).

It is found in the nucleus. Its function is as follows. CPSF plays a key role in pre-mRNA 3'-end formation, recognizing the AAUAAA signal sequence and interacting with poly(A)polymerase and other factors to bring about cleavage and poly(A) addition. This subunit is involved in the RNA recognition step of the polyadenylation reaction. In Caenorhabditis elegans, this protein is Probable cleavage and polyadenylation specificity factor subunit 1 (cpsf-1).